The sequence spans 226 residues: Protein B (226 aa).

Residues 37–100 (DNVQGTDYEK…FSTQHLANKV (64 aa)) form an igG constant region-binding region. Repeats lie at residues 158–168 (TKSKLDKEIWN), 169–179 (TRFTRDKKVLN), and 180–190 (VKEFKVYNTLN).

The protein resides in the secreted. Its function is as follows. Protein B belongs to the group of bacterial Fc-binding protein. This Streptococcus agalactiae protein is Protein B.